The primary structure comprises 224 residues: Cytidylate kinase (224 aa).

9–17 contacts ATP; that stretch reads GPSGSGKGT.

This sequence belongs to the cytidylate kinase family. Type 1 subfamily.

It localises to the cytoplasm. The enzyme catalyses CMP + ATP = CDP + ADP. It catalyses the reaction dCMP + ATP = dCDP + ADP. The protein is Cytidylate kinase of Saccharophagus degradans (strain 2-40 / ATCC 43961 / DSM 17024).